Consider the following 399-residue polypeptide: Phosphoglycerate kinase (399 aa).

Residues 22 to 24, arginine 38, 61 to 64, arginine 120, and arginine 153 contribute to the substrate site; these read DFN and HLGR. ATP-binding positions include lysine 204, glutamate 326, and 353–356; that span reads GGDT.

It belongs to the phosphoglycerate kinase family. Monomer.

It localises to the cytoplasm. It catalyses the reaction (2R)-3-phosphoglycerate + ATP = (2R)-3-phospho-glyceroyl phosphate + ADP. It functions in the pathway carbohydrate degradation; glycolysis; pyruvate from D-glyceraldehyde 3-phosphate: step 2/5. The sequence is that of Phosphoglycerate kinase from Geotalea daltonii (strain DSM 22248 / JCM 15807 / FRC-32) (Geobacter daltonii).